The sequence spans 395 residues: Immunity-related GTPase family M protein 2 (395 aa).

The 177-residue stretch at 63–239 (NKIKIAVTGD…PKLRETLQKD (177 aa)) folds into the IRG-type G domain. Residues 72 to 79 (DSGNGMSS), 97 to 101 (TGVVR), and 179 to 181 (KLD) each bind GTP.

The protein belongs to the TRAFAC class dynamin-like GTPase superfamily. IRG family. In terms of processing, ubiquitinated; polyubiquitinated in the cytosol, promoting Gbp1 recruitment to the T.gondii parasitophorous vacuole membranes.

Its subcellular location is the cytoplasmic vesicle membrane. The protein localises to the golgi apparatus membrane. The protein resides in the cytoplasm. It is found in the cytosol. It carries out the reaction GTP + H2O = GDP + phosphate + H(+). Functionally, immunity-related GTPase that plays important roles in innate immunity and inflammatory response. Acts as a dynamin-like protein that binds to intracellular membranes and promotes remodeling and trafficking of those membranes. Required for clearance of acute protozoan and bacterial infections. Acts by participating to Tgtp1/Irgb6 and Gbp1-mediated parasite killing by promoting their accumulation on the T.gondii parasitophorous vacuole membranes. Also required for prolonged loading of ubiquitin and p62/Sqstm1 to parasitophorous vacuole membranes. Also acts as a key negative regulator of the inflammatory response by inhibiting the non-canonical inflammasome, thereby protecting against Casp11-driven septic shock during endotoxemia. The sequence is that of Immunity-related GTPase family M protein 2 from Mus musculus (Mouse).